The chain runs to 315 residues: Calcium homeostasis modulator protein 6 (315 aa).

Over 1–21 (MEKFKAVLDLQIKHRSALGYG) the chain is Cytoplasmic. Residues 22 to 37 (LVTLLTAGGEKIFSTV) traverse the membrane as a helical segment. Over 38 to 46 (VFQCPCTAT) the chain is Extracellular. 3 disulfides stabilise this stretch: cysteine 41–cysteine 127, cysteine 43–cysteine 156, and cysteine 140–cysteine 147. A helical membrane pass occupies residues 47–68 (LNLTYGLVFLLVPALALFLLGY). Residues 69 to 103 (ALSARTWRLLTGCCSRSASTRSSSGLRSTLVCAQV) lie on the Cytoplasmic side of the membrane. The chain crosses the membrane as a helical span at residues 104 to 128 (SAVAALAPLTWVAVALLGGSFYQCA). Residues 129-169 (VSGSTRLASYLCKDRNHSCIAKLPQVPCNKQEAEMQEILSQ) are Extracellular-facing. A helical membrane pass occupies residues 170–192 (LKAQSQVLGWVLIAAVIFLLLVF). At 193-315 (KCVSRCFSPV…DAAMANTHGV (123 aa)) the chain is on the cytoplasmic side.

The protein belongs to the CALHM family. Oligomerizes to form decameric and undecameric channels.

The protein resides in the cell membrane. The catalysed reaction is ATP(in) = ATP(out). Pore-forming subunit of an ATP-permeable channel. In response to pathogen-derived and proinflammatory stimuli, relocates from intracellular compartments to NK-dendritic cell and NK-macrophage immune synapses where it mediates ATP efflux and NK cell activation involved in antimicrobial and antitumor responses. May assemble to form gap junction channel-like structures with gating and ion conductance likely regulated by membrane lipids and voltage rather than by extracellular calcium levels. This Rattus norvegicus (Rat) protein is Calcium homeostasis modulator protein 6.